The following is a 1368-amino-acid chain: DNA-directed RNA polymerase subunit beta (1368 aa).

This sequence belongs to the RNA polymerase beta chain family. The RNAP catalytic core consists of 2 alpha, 1 beta, 1 beta' and 1 omega subunit. When a sigma factor is associated with the core the holoenzyme is formed, which can initiate transcription.

It catalyses the reaction RNA(n) + a ribonucleoside 5'-triphosphate = RNA(n+1) + diphosphate. Its function is as follows. DNA-dependent RNA polymerase catalyzes the transcription of DNA into RNA using the four ribonucleoside triphosphates as substrates. The chain is DNA-directed RNA polymerase subunit beta from Ralstonia nicotianae (strain ATCC BAA-1114 / GMI1000) (Ralstonia solanacearum).